Here is a 136-residue protein sequence, read N- to C-terminus: Small ribosomal subunit protein eS17A (136 aa).

Belongs to the eukaryotic ribosomal protein eS17 family. As to quaternary structure, component of the small ribosomal subunit (SSU). Mature yeast ribosomes consist of a small (40S) and a large (60S) subunit. The 40S small subunit contains 1 molecule of ribosomal RNA (18S rRNA) and 33 different proteins (encoded by 57 genes). The large 60S subunit contains 3 rRNA molecules (25S, 5.8S and 5S rRNA) and 46 different proteins (encoded by 81 genes).

The protein resides in the cytoplasm. Functionally, component of the ribosome, a large ribonucleoprotein complex responsible for the synthesis of proteins in the cell. The small ribosomal subunit (SSU) binds messenger RNAs (mRNAs) and translates the encoded message by selecting cognate aminoacyl-transfer RNA (tRNA) molecules. The large subunit (LSU) contains the ribosomal catalytic site termed the peptidyl transferase center (PTC), which catalyzes the formation of peptide bonds, thereby polymerizing the amino acids delivered by tRNAs into a polypeptide chain. The nascent polypeptides leave the ribosome through a tunnel in the LSU and interact with protein factors that function in enzymatic processing, targeting, and the membrane insertion of nascent chains at the exit of the ribosomal tunnel. This chain is Small ribosomal subunit protein eS17A, found in Saccharomyces cerevisiae (strain ATCC 204508 / S288c) (Baker's yeast).